Reading from the N-terminus, the 2500-residue chain is Non-reducing polyketide synthase atr1 (2500 aa).

Residues 13 to 260 (VFSPQSKAPK…HNPENANLAL (248 aa)) are N-terminal acylcarrier protein transacylase domain (SAT). The Ketosynthase family 3 (KS3) domain maps to 385–808 (TDAVAVVGMA…GSNSAVLLCQ (424 aa)). Residues cysteine 557, histidine 692, and histidine 731 each act as for beta-ketoacyl synthase activity in the active site. Positions 908–1199 (MTFSGQSRQS…EFPERHTFLD (292 aa)) are malonyl-CoA:ACP transacylase (MAT) domain. Serine 995 (for acyl/malonyl transferase activity) is an active-site residue. Positions 1286–1413 (PRLVEPRTKP…GDFGFTTQTQ (128 aa)) are N-terminal hotdog fold. The 299-residue stretch at 1286-1584 (PRLVEPRTKP…FTKLPITRLE (299 aa)) folds into the PKS/mFAS DH domain. The product template (PT) domain stretch occupies residues 1287–1583 (RLVEPRTKPS…QFTKLPITRL (297 aa)). Histidine 1317 (proton acceptor; for dehydratase activity) is an active-site residue. Residues 1433–1584 (SETLKSKRAY…FTKLPITRLE (152 aa)) are C-terminal hotdog fold. Aspartate 1495 (proton donor; for dehydratase activity) is an active-site residue. The tract at residues 1594–1649 (AHNTPILKSSQQDSIVSASSSSSTEHSDDDSEDDGSRSPSHSDTSVDSESEAPADN) is disordered. Low complexity predominate over residues 1602-1617 (SSQQDSIVSASSSSST). The 77-residue stretch at 1649–1725 (NGAAKKLKSL…RIVAPEMAAK (77 aa)) folds into the Carrier domain. O-(pantetheine 4'-phosphoryl)serine is present on serine 1683. The interval 2164–2496 (KSYRIETMPY…YEFIFDVVGR (333 aa)) is thioesterase (TE) domain. Residues serine 2285 and aspartate 2434 each act as for thioesterase activity in the active site.

It carries out the reaction 6 malonyl-CoA + 2 acetyl-CoA + 2 S-adenosyl-L-methionine + 3 H(+) = 4-O-demethylbarbatate + 2 S-adenosyl-L-homocysteine + 6 CO2 + 8 CoA + H2O. It participates in secondary metabolite biosynthesis; terpenoid biosynthesis. Non-reducing polyketide synthase; part of the gene cluster that mediates the biosynthesis of atranorin, a depside of polyketide origin that accumulates in the cortical or medullary layers of lichen thalli. The first step in the pathway is performed by the non-reducing polyketide synthase atr1 that produces 4-O-demethylbarbatic acid composed of two 3-methylorsellinic acid (3MOA) moieties from S-adenosyl-L-methionine (SAM), acetyl-CoA and malonyl-CoA units. The pathway continues with the actions of the cytochrome P450 monooygenase atr2 that catalizes the oxidation of c-9 and the O-methyltransferase atr3 that performs the methylation of the carboxyl group to yield atranorin, via the proatranorin II and III intermediates if atr2 acts first, or the proatranorin I intermediate if atr3 acts first. The chain is Non-reducing polyketide synthase atr1 from Stereocaulon alpinum (Alpine snow lichen).